Here is a 613-residue protein sequence, read N- to C-terminus: Lysophospholipase 1 (613 aa).

Positions methionine 1–alanine 21 are cleaved as a signal peptide. Positions aspartate 55 to aspartate 593 constitute a PLA2c domain. N-linked (GlcNAc...) asparagine glycans are attached at residues asparagine 142, asparagine 173, asparagine 220, asparagine 244, asparagine 281, asparagine 319, asparagine 348, asparagine 365, asparagine 494, asparagine 499, asparagine 523, asparagine 551, and asparagine 572.

It belongs to the lysophospholipase family.

Its subcellular location is the secreted. The enzyme catalyses a 1-acyl-sn-glycero-3-phosphocholine + H2O = sn-glycerol 3-phosphocholine + a fatty acid + H(+). Functionally, catalyzes the release of fatty acids from lysophospholipids. Required for survival under high osmolarity, for normal osmotic stress-induced gene expression, and for nutrient-mediated repression of sexual differentiation. This is Lysophospholipase 1 (plb1) from Schizosaccharomyces pombe (strain 972 / ATCC 24843) (Fission yeast).